Consider the following 236-residue polypeptide: Endonuclease V (236 aa).

Residues Asp47 and Asp115 each contribute to the Mg(2+) site.

It belongs to the endonuclease V family. Mg(2+) serves as cofactor.

Its subcellular location is the cytoplasm. It catalyses the reaction Endonucleolytic cleavage at apurinic or apyrimidinic sites to products with a 5'-phosphate.. In terms of biological role, DNA repair enzyme involved in the repair of deaminated bases. Selectively cleaves double-stranded DNA at the second phosphodiester bond 3' to a deoxyinosine leaving behind the intact lesion on the nicked DNA. This chain is Endonuclease V, found in Xanthomonas campestris pv. campestris (strain B100).